Reading from the N-terminus, the 89-residue chain is Small ribosomal subunit protein uS15 (89 aa).

Belongs to the universal ribosomal protein uS15 family. As to quaternary structure, part of the 30S ribosomal subunit. Forms a bridge to the 50S subunit in the 70S ribosome, contacting the 23S rRNA.

In terms of biological role, one of the primary rRNA binding proteins, it binds directly to 16S rRNA where it helps nucleate assembly of the platform of the 30S subunit by binding and bridging several RNA helices of the 16S rRNA. Its function is as follows. Forms an intersubunit bridge (bridge B4) with the 23S rRNA of the 50S subunit in the ribosome. This Pseudomonas putida (Arthrobacter siderocapsulatus) protein is Small ribosomal subunit protein uS15.